The primary structure comprises 951 residues: Leucine-rich repeat-containing G-protein coupled receptor 4 (951 aa).

The signal sequence occupies residues 1–24 (MPGPLRLLCFFALGLLGSAGPSGA). In terms of domain architecture, LRRNT spans 25-57 (APPLCAAPCSCDGDRRVDCSGKGLTAVPEGLSA). Over 25–544 (APPLCAAPCS…LLGSWMIRLT (520 aa)) the chain is Extracellular. Intrachain disulfides connect cysteine 29/cysteine 35 and cysteine 33/cysteine 43. 15 LRR repeats span residues 58-79 (FTQA…AFKN), 82-103 (FLEE…ALSG), 106-127 (ELKV…AIRG), 130-151 (ALQS…SFEG), 154-177 (QLRH…SNLP), 178-199 (TLQA…AFTN), 202-223 (SLVV…CFDG), 226-247 (NLET…IKAL), 249-270 (SLKE…AFAG), 273-294 (LLRT…AFHN), 320-341 (HLES…LCQN), 344-365 (MLRT…NGCR), 366-387 (ALEE…TFQG), 390-411 (SLRI…AFAK), and 414-435 (TITN…GLNG). An N-linked (GlcNAc...) asparagine glycan is attached at asparagine 68. N-linked (GlcNAc...) asparagine glycosylation is found at asparagine 188 and asparagine 199. The N-linked (GlcNAc...) asparagine glycan is linked to asparagine 294. A disulfide bridge links cysteine 339 with cysteine 364. 2 disulfides stabilise this stretch: cysteine 470/cysteine 522 and cysteine 471/cysteine 476. The interval 487 to 512 (NSPQDHSVTKEKGATDAANATSTAES) is disordered. Positions 501–510 (TDAANATSTA) are enriched in low complexity. The N-linked (GlcNAc...) asparagine glycan is linked to asparagine 505. Residues 545-565 (VWFIFLVALLFNLLVILTVFA) form a helical membrane-spanning segment. Residues 566-575 (SCSSLPASKL) are Cytoplasmic-facing. A helical transmembrane segment spans residues 576–596 (FIGLISVSNLLMGIYTGILTF). Residues 597–619 (LDAVSWGRFAEFGIWWETGSGCK) are Extracellular-facing. An intrachain disulfide couples cysteine 618 to cysteine 693. The chain crosses the membrane as a helical span at residues 620 to 640 (VAGSLAVFSSESAVFLLTLAA). Topologically, residues 641-661 (VERSVFAKDVMKNGKSSHLRQ) are cytoplasmic. A helical transmembrane segment spans residues 662 to 682 (FQVAALVALLGAAIAGCFPLF). Over 683–703 (HGGQYSASPLCLPFPTGETPS) the chain is Extracellular. Residues 704 to 724 (LGFTVTLVLLNSLAFLLMAII) traverse the membrane as a helical segment. The Cytoplasmic portion of the chain corresponds to 725 to 756 (YTKLYCNLEKEDPSENSQSSMIKHVAWLIFTN). The helical transmembrane segment at 757–777 (CIFFCPVAFFSFAPLITAISI) threads the bilayer. Residues 778–783 (SPEIMK) lie on the Extracellular side of the membrane. Residues 784 to 804 (SVTLIFFPLPACLNPVLYVFF) traverse the membrane as a helical segment. The Cytoplasmic segment spans residues 805–951 (NPKFKDDWKL…YAYNLPRVRD (147 aa)). Serine 920 is subject to Phosphoserine.

The protein belongs to the G-protein coupled receptor 1 family.

It localises to the cell membrane. Receptor for R-spondins that potentiates the canonical Wnt signaling pathway and is involved in the formation of various organs. Upon binding to R-spondins (RSPO1, RSPO2, RSPO3 or RSPO4), associates with phosphorylated LRP6 and frizzled receptors that are activated by extracellular Wnt receptors, triggering the canonical Wnt signaling pathway to increase expression of target genes. In contrast to classical G-protein coupled receptors, does not activate heterotrimeric G-proteins to transduce the signal. Its function as activator of the Wnt signaling pathway is required for the development of various organs, including liver, kidney, intestine, bone, reproductive tract and eye. May also act as a receptor for norrin (NDP), such results however require additional confirmation in vivo. Required during spermatogenesis to activate the Wnt signaling pathway in peritubular myoid cells. Required for the maintenance of intestinal stem cells and Paneth cell differentiation in postnatal intestinal crypts. Acts as a regulator of bone formation and remodeling. Involved in kidney development; required for maintaining the ureteric bud in an undifferentiated state. Involved in the development of the anterior segment of the eye. Required during erythropoiesis. Also acts as a negative regulator of innate immunity by inhibiting TLR2/TLR4 associated pattern-recognition and pro-inflammatory cytokine production. Plays an important role in regulating the circadian rhythms of plasma lipids, partially through regulating the rhythmic expression of MTTP. Required for proper development of GnRH neurons (gonadotropin-releasing hormone expressing neurons) that control the release of reproductive hormones from the pituitary gland. In Mus musculus (Mouse), this protein is Leucine-rich repeat-containing G-protein coupled receptor 4 (Lgr4).